The chain runs to 215 residues: Adenylate kinase (215 aa).

Residue 10–15 (GAGKGT) coordinates ATP. The NMP stretch occupies residues 30-59 (STGDIFRKNIKEKTELGQKVEGLLAQGKLV). AMP contacts are provided by residues threonine 31, arginine 36, 57–59 (KLV), 85–88 (GFPR), and glutamine 92. An LID region spans residues 126–163 (GRRVCPSCGASYHIDNNPTKVDGICDACQTPVIQREDD). Position 127 (arginine 127) interacts with ATP. Cysteine 130 and cysteine 133 together coordinate Zn(2+). 136–137 (SY) contacts ATP. Residues cysteine 150 and cysteine 153 each contribute to the Zn(2+) site. Residues arginine 160 and arginine 171 each contribute to the AMP site. Leucine 199 is an ATP binding site.

This sequence belongs to the adenylate kinase family. Monomer.

It is found in the cytoplasm. It carries out the reaction AMP + ATP = 2 ADP. The protein operates within purine metabolism; AMP biosynthesis via salvage pathway; AMP from ADP: step 1/1. Functionally, catalyzes the reversible transfer of the terminal phosphate group between ATP and AMP. Plays an important role in cellular energy homeostasis and in adenine nucleotide metabolism. In Finegoldia magna (strain ATCC 29328 / DSM 20472 / WAL 2508) (Peptostreptococcus magnus), this protein is Adenylate kinase.